The sequence spans 385 residues: MYSTELGINFFGNESNKKRQLNKIEILKKNIKNLKIFLIIAGTNTSQIPGISAAGINPKSRRTTALADAEFLLEGASKGHKYKLPLLNAGVTPALISHVCSKLINAYPVIVPLGIGVKPYFNHLVVEDRNLGPSNCLTTGKSMTKERVLNLYEKGLAIGKSLKQPVLISESVPGGTTTAQAVMEAFGLQVSNLVGSSLFKAPRELRRQVIKRGLLNAHFKADSDSFDVVAAVGDPFQAFSMGLLIGARLAKQPVILSGGSQMLAVILLVLEFLGEKNKDEFIEDVFIATTGWLVKDNSLNDLVNLINEKYDVKLLGLASPLNFKSSKYKELKDYELGHVKEGVGAGGISLLAFLDGFKNEEIVSLCQQNLEMMKGLGQISLEKDC.

This sequence belongs to the UPF0284 family.

The polypeptide is UPF0284 protein P9301_04631 (Prochlorococcus marinus (strain MIT 9301)).